The chain runs to 284 residues: MNRLQLYFRLVRLNKPIGILLLLWPTLWALWLASDGKPDWTLLAIFTLGTILMRSAGCAINDYADRDFDKYVQRTVDRPVTSGKIQPREALLVALALALLSFALIWPLNTLTKQLSIAAVIIAGTYPYFKRFFAIPQAYLGIAFGFGIPMGFAAVQNTVPAAAWWLLVANVFWAVAYDTEYAMVDREDDLKLGMKTSAITFGRHDVAAVMFCYAVTLGLIFIVGWQYGLRTWFAAGMLIATGCAIYHYTLIRARERAGCFAAFRHNNWLGAAIFGGVVLDYLIR.

The next 8 membrane-spanning stretches (helical) occupy residues 16–36, 40–60, 91–111, 132–152, 157–177, 206–226, 231–251, and 259–279; these read PIGI…ASDG, WTLL…GCAI, LLVA…LNTL, FFAI…PMGF, NTVP…AVAY, VAAV…VGWQ, TWFA…YTLI, and CFAA…GVVL.

It belongs to the UbiA prenyltransferase family. Mg(2+) serves as cofactor.

It is found in the cell inner membrane. It carries out the reaction all-trans-octaprenyl diphosphate + 4-hydroxybenzoate = 4-hydroxy-3-(all-trans-octaprenyl)benzoate + diphosphate. The protein operates within cofactor biosynthesis; ubiquinone biosynthesis. Its function is as follows. Catalyzes the prenylation of para-hydroxybenzoate (PHB) with an all-trans polyprenyl group. Mediates the second step in the final reaction sequence of ubiquinone-8 (UQ-8) biosynthesis, which is the condensation of the polyisoprenoid side chain with PHB, generating the first membrane-bound Q intermediate 3-octaprenyl-4-hydroxybenzoate. The protein is 4-hydroxybenzoate octaprenyltransferase of Herminiimonas arsenicoxydans.